The sequence spans 668 residues: DNA ligase (668 aa).

NAD(+) contacts are provided by residues 31-35 (DAEYD), 80-81 (SL), and Glu-112. Residue Lys-114 is the N6-AMP-lysine intermediate of the active site. The NAD(+) site is built by Arg-135, Glu-172, Lys-289, and Lys-313. Cys-407, Cys-410, Cys-425, and Cys-431 together coordinate Zn(2+). Residues 591–668 (SVPQPLAGKV…NEEQLIELLN (78 aa)) form the BRCT domain.

This sequence belongs to the NAD-dependent DNA ligase family. LigA subfamily. Mg(2+) serves as cofactor. The cofactor is Mn(2+).

It catalyses the reaction NAD(+) + (deoxyribonucleotide)n-3'-hydroxyl + 5'-phospho-(deoxyribonucleotide)m = (deoxyribonucleotide)n+m + AMP + beta-nicotinamide D-nucleotide.. Functionally, DNA ligase that catalyzes the formation of phosphodiester linkages between 5'-phosphoryl and 3'-hydroxyl groups in double-stranded DNA using NAD as a coenzyme and as the energy source for the reaction. It is essential for DNA replication and repair of damaged DNA. The chain is DNA ligase from Aliivibrio fischeri (strain MJ11) (Vibrio fischeri).